The sequence spans 1272 residues: Ubiquitin carboxyl-terminal hydrolase 2 (1272 aa).

The 523-residue stretch at 736 to 1258 (TGINNIGNTC…TPYFLVYVKQ (523 aa)) folds into the USP domain. The active-site Nucleophile is cysteine 745. Residues 884–918 (DGLNGDVGTDANRKKNESNDAEVSENEDTTGLTSP) form a disordered region. A compositionally biased stretch (acidic residues) spans 902 to 911 (NDAEVSENED). Position 907 is a phosphoserine (serine 907). The Proton acceptor role is filled by histidine 1209.

It belongs to the peptidase C19 family. In terms of assembly, forms a ternary complex with RSP5 and RUP1. Interacts with RSP5. Interacts with FZO1.

It catalyses the reaction Thiol-dependent hydrolysis of ester, thioester, amide, peptide and isopeptide bonds formed by the C-terminal Gly of ubiquitin (a 76-residue protein attached to proteins as an intracellular targeting signal).. In terms of biological role, has an ATP-independent isopeptidase activity, cleaving at the C-terminus of the ubiquitin moiety in natural or engineered linear fusion proteins, irrespective of their size or the presence of an N-terminal extension to ubiquitin. Hydrolyzes polyubiquitinated 'Lys-63' polyubiquitin chains in RPO21, producing mono-ubiquitinated RNA polymerase II. Removes ubiquitin chains that initiate proteolysis of FZO1 and inhibit mitochondrial fusion. This chain is Ubiquitin carboxyl-terminal hydrolase 2 (UBP2), found in Saccharomyces cerevisiae (strain ATCC 204508 / S288c) (Baker's yeast).